Consider the following 375-residue polypeptide: Myb family transcription factor PHL5 (375 aa).

Positions 159–171 are enriched in polar residues; sequence TSSQHQPKQSHPR. The disordered stretch occupies residues 159–178; the sequence is TSSQHQPKQSHPRFSSPPSF. The 61-residue stretch at 189 to 249 folds into the HTH myb-type domain; that stretch reads CVNKTRIRWT…HLQKYRIAKY (61 aa). Residues 220–245 constitute a DNA-binding region (H-T-H motif); sequence PKAILKRMDSDGLTIFHVKSHLQKYR. Residues 279 to 299 are a coiled coil; sequence KEALQLQLDVQRHLHEQLEIQ. An LHEQLE motif is present at residues 292–297; that stretch reads LHEQLE.

The protein belongs to the MYB-CC family.

It is found in the nucleus. This chain is Myb family transcription factor PHL5, found in Arabidopsis thaliana (Mouse-ear cress).